The chain runs to 493 residues: Galactose-1-phosphate uridylyltransferase (493 aa).

This sequence belongs to the galactose-1-phosphate uridylyltransferase type 2 family.

Its subcellular location is the cytoplasm. It carries out the reaction alpha-D-galactose 1-phosphate + UDP-alpha-D-glucose = alpha-D-glucose 1-phosphate + UDP-alpha-D-galactose. It participates in carbohydrate metabolism; galactose metabolism. The polypeptide is Galactose-1-phosphate uridylyltransferase (Streptococcus salivarius).